The following is a 186-amino-acid chain: Ribosome-recycling factor (186 aa).

The interval 135–164 is disordered; the sequence is DGMDDLKKAEKDGEIGQDESRAQSERVQKM.

Belongs to the RRF family.

The protein localises to the cytoplasm. In terms of biological role, responsible for the release of ribosomes from messenger RNA at the termination of protein biosynthesis. May increase the efficiency of translation by recycling ribosomes from one round of translation to another. The chain is Ribosome-recycling factor from Sinorhizobium medicae (strain WSM419) (Ensifer medicae).